Here is a 295-residue protein sequence, read N- to C-terminus: Elongation factor Ts (295 aa).

Residues 79–82 (TDFV) form an involved in Mg(2+) ion dislocation from EF-Tu region.

It belongs to the EF-Ts family.

The protein localises to the cytoplasm. Functionally, associates with the EF-Tu.GDP complex and induces the exchange of GDP to GTP. It remains bound to the aminoacyl-tRNA.EF-Tu.GTP complex up to the GTP hydrolysis stage on the ribosome. This chain is Elongation factor Ts, found in Bacillus cereus (strain ATCC 10987 / NRS 248).